A 234-amino-acid chain; its full sequence is MIFNCKVKKVEASDSHIYKVFIKPDKCFDFKAGQYVIVYLNGKNLPFSIANCPTCNELLELHVGGSVKESAIEAISHFINAFIYQKEFTIDAPHGDAWLRDESQSPLLLIAGGTGLSYINSILSCCISKQLSQPIYLYWGVNNCNLLYADQQLKTLAAQYRNINYIPVVENLNTDWQGKIGNVIDAVIEDFSDLSDFDIYVCGPFGMSRTAKDILISQKKANIGKMYSDAFSYT.

112–116 (GGTGL) provides a ligand contact to pyridine.

The protein belongs to the Fre/LuxG FAD/NAD(P) flavoprotein oxidoreductase family.

Probable flavin reductase in the luminescent systems of different marine bacteria. In Photobacterium leiognathi, this protein is Probable flavin reductase (luxG).